Consider the following 215-residue polypeptide: Flavin-dependent thymidylate synthase (215 aa).

A ThyX domain is found at 1–215; the sequence is MDVRFISLTK…FPTVAAALEW (215 aa). FAD is bound by residues S56, 79 to 81, and E87; that span reads RHR. Residues 76–79, 87–91, and R155 each bind dUMP; these read QILR and EFSLR. The short motif at 79–89 is the ThyX motif element; it reads RHRSFSFQEFS. Residue H177 participates in FAD binding. A dUMP-binding site is contributed by R182. R182 functions as the Involved in ionization of N3 of dUMP, leading to its activation in the catalytic mechanism.

This sequence belongs to the thymidylate synthase ThyX family. As to quaternary structure, homotetramer. FAD serves as cofactor.

It catalyses the reaction dUMP + (6R)-5,10-methylene-5,6,7,8-tetrahydrofolate + NADPH + H(+) = dTMP + (6S)-5,6,7,8-tetrahydrofolate + NADP(+). It participates in pyrimidine metabolism; dTTP biosynthesis. Catalyzes the reductive methylation of 2'-deoxyuridine-5'-monophosphate (dUMP) to 2'-deoxythymidine-5'-monophosphate (dTMP) while utilizing 5,10-methylenetetrahydrofolate (mTHF) as the methyl donor, and NADPH and FADH(2) as the reductant. The sequence is that of Flavin-dependent thymidylate synthase from Synechocystis sp. (strain ATCC 27184 / PCC 6803 / Kazusa).